Here is a 537-residue protein sequence, read N- to C-terminus: Endoprotease aex-5 (537 aa).

Residues 1–17 (MKLIFLLLLFGVSPIVC) form the signal peptide. Residues 18–99 (QDFEDGVFLA…KLQGFRRYKR (82 aa)) constitute a propeptide that is removed on maturation. A Peptidase S8 domain is found at 111–413 (VWNLTPSLYI…FGLLNAQKLV (303 aa)). An N-linked (GlcNAc...) asparagine glycan is attached at asparagine 129. Active-site charge relay system residues include aspartate 139 and histidine 178. A disulfide bond links cysteine 286 and cysteine 316. Catalysis depends on serine 346, which acts as the Charge relay system. N-linked (GlcNAc...) asparagine glycosylation is present at asparagine 380. One can recognise a P/Homo B domain in the interval 407 to 537 (LNAQKLVVMA…KMFKVVGTMS (131 aa)).

Belongs to the peptidase S8 family. Furin subfamily.

The protein localises to the secreted. Probable serine endoprotease which cleaves preproteins at paired basic amino acids. May process FMRFamide-like (flp) and neuropeptide-like protein (nlp) neuropeptides. In muscles, involved in neuronal retrograde signaling by regulating presynaptic activity and localization of synaptic vesicle fusion protein unc-13 at the neuromuscular junction (NMJ). Acts in the intestine to regulate anterior body muscle contractions (aBOC) and the expulsion steps during the defecation motor program (DMP). Probably by regulating DMP, required for fatty acid uptake by intestinal cells and therefore regulates the levels of triglycerides in the intestine. Plays a role in locomotion. The protein is Endoprotease aex-5 of Caenorhabditis elegans.